The sequence spans 377 residues: GTP 3',8-cyclase (377 aa).

A disordered region spans residues Met-1–His-29. In terms of domain architecture, Radical SAM core spans Arg-45–Arg-271. Arg-54 is a GTP binding site. [4Fe-4S] cluster is bound by residues Cys-61 and Cys-65. Tyr-67 lines the S-adenosyl-L-methionine pocket. Position 68 (Cys-68) interacts with [4Fe-4S] cluster. A GTP-binding site is contributed by Arg-105. Gly-109 provides a ligand contact to S-adenosyl-L-methionine. A GTP-binding site is contributed by Thr-140. Ser-164 provides a ligand contact to S-adenosyl-L-methionine. Lys-201 is a binding site for GTP. An S-adenosyl-L-methionine-binding site is contributed by Met-235. Residues Cys-304 and Cys-307 each coordinate [4Fe-4S] cluster. Arg-309–Arg-311 contributes to the GTP binding site. Cys-321 contacts [4Fe-4S] cluster.

This sequence belongs to the radical SAM superfamily. MoaA family. As to quaternary structure, monomer and homodimer. It depends on [4Fe-4S] cluster as a cofactor.

The enzyme catalyses GTP + AH2 + S-adenosyl-L-methionine = (8S)-3',8-cyclo-7,8-dihydroguanosine 5'-triphosphate + 5'-deoxyadenosine + L-methionine + A + H(+). It functions in the pathway cofactor biosynthesis; molybdopterin biosynthesis. Catalyzes the cyclization of GTP to (8S)-3',8-cyclo-7,8-dihydroguanosine 5'-triphosphate. The sequence is that of GTP 3',8-cyclase from Corynebacterium glutamicum (strain ATCC 13032 / DSM 20300 / JCM 1318 / BCRC 11384 / CCUG 27702 / LMG 3730 / NBRC 12168 / NCIMB 10025 / NRRL B-2784 / 534).